The primary structure comprises 699 residues: D-(-)-3-hydroxybutyrate oligomer hydrolase (699 aa).

A signal peptide spans 1 to 33 (MTAIRGGSRRAPGLALALLGGVLLGACHGDENA). The active-site Charge relay system is S311.

Belongs to the D-(-)-3-hydroxybutyrate oligomer hydrolase family.

Its subcellular location is the secreted. The enzyme catalyses (3R)-hydroxybutanoate dimer + H2O = 2 (R)-3-hydroxybutanoate + H(+). It participates in lipid metabolism; butanoate metabolism. Its function is as follows. Participates in the degradation of poly-3-hydroxybutyrate (PHB). It works downstream of poly(3-hydroxybutyrate) depolymerase, hydrolyzing D(-)-3-hydroxybutyrate oligomers of various length (3HB-oligomers) into 3HB-monomers. The polypeptide is D-(-)-3-hydroxybutyrate oligomer hydrolase (Burkholderia mallei (strain SAVP1)).